The primary structure comprises 544 residues: Chaperonin GroEL (544 aa).

ATP-binding positions include 29–32 (TLGP), Lys50, 86–90 (DGTTT), Gly414, and Asp495.

Belongs to the chaperonin (HSP60) family. Forms a cylinder of 14 subunits composed of two heptameric rings stacked back-to-back. Interacts with the co-chaperonin GroES.

The protein localises to the cytoplasm. The enzyme catalyses ATP + H2O + a folded polypeptide = ADP + phosphate + an unfolded polypeptide.. In terms of biological role, together with its co-chaperonin GroES, plays an essential role in assisting protein folding. The GroEL-GroES system forms a nano-cage that allows encapsulation of the non-native substrate proteins and provides a physical environment optimized to promote and accelerate protein folding. The chain is Chaperonin GroEL from Treponema pallidum subsp. pallidum (strain SS14).